A 319-amino-acid polypeptide reads, in one-letter code: Non-homologous end joining protein Ku (319 aa).

One can recognise a Ku domain in the interval I10–E188. Residues Q252 to A319 form a disordered region. Positions S260–R274 are enriched in basic and acidic residues. Basic residues predominate over residues T305–A319.

This sequence belongs to the prokaryotic Ku family. As to quaternary structure, homodimer. Interacts with LigD.

Its function is as follows. With LigD forms a non-homologous end joining (NHEJ) DNA repair enzyme, which repairs dsDNA breaks with reduced fidelity. Binds linear dsDNA with 5'- and 3'- overhangs but not closed circular dsDNA nor ssDNA. Recruits and stimulates the ligase activity of LigD. The protein is Non-homologous end joining protein Ku of Streptomyces avermitilis (strain ATCC 31267 / DSM 46492 / JCM 5070 / NBRC 14893 / NCIMB 12804 / NRRL 8165 / MA-4680).